Reading from the N-terminus, the 264-residue chain is MSVISMKQLLEAGVHFGHQTRRWNPKMKEYIFTERNGIYIIDLQKTVRMVEIAYNAVRQMAADGGKILFIGTKKQAQDAVREEAERCGMFYVNQRWLGGMLTNFETIKKRIARLNELEEIEGTEYWSKLTKKEQAQLLHEKEKLEKNLGGIKGMKSLPDMAFVIDPRRERIAVSELRKLGIPIVAIVDTNCDPDEIDYVIPGNDDAIRAVKLLTSKIADAVIEGRQGVDTSATVDEEEAEVAEETESMESAEDLDADLIEEEAE.

The segment at 228-264 is disordered; that stretch reads VDTSATVDEEEAEVAEETESMESAEDLDADLIEEEAE. Acidic residues predominate over residues 234 to 264; that stretch reads VDEEEAEVAEETESMESAEDLDADLIEEEAE.

Belongs to the universal ribosomal protein uS2 family.

The chain is Small ribosomal subunit protein uS2 from Symbiobacterium thermophilum (strain DSM 24528 / JCM 14929 / IAM 14863 / T).